A 311-amino-acid polypeptide reads, in one-letter code: Thioredoxin reductase (311 aa).

35-42 (ERGIPGGQ) is an FAD binding site. The cysteines at positions 134 and 137 are disulfide-linked. 277-286 (DVRDKGLRQI) contacts FAD.

The protein belongs to the class-II pyridine nucleotide-disulfide oxidoreductase family. In terms of assembly, homodimer. The cofactor is FAD.

It localises to the cytoplasm. The enzyme catalyses [thioredoxin]-dithiol + NADP(+) = [thioredoxin]-disulfide + NADPH + H(+). This Staphylococcus aureus (strain MRSA252) protein is Thioredoxin reductase (trxB).